Here is a 769-residue protein sequence, read N- to C-terminus: Elongation factor G, mitochondrial (769 aa).

A mitochondrion-targeting transit peptide spans 1–42; sequence MSKFLRGISSISSASLKARASNFGVFHGVCSARNLHQSRLCL. The region spanning 74-356 is the tr-type G domain; it reads TRLRNIGVSA…AVVDYLPQPN (283 aa). GTP is bound by residues 83 to 90, 154 to 158, and 208 to 211; these read AHIDSGKT, DTPGH, and NKMD.

The protein belongs to the TRAFAC class translation factor GTPase superfamily. Classic translation factor GTPase family. EF-G/EF-2 subfamily.

The protein localises to the mitochondrion. Its pathway is protein biosynthesis; polypeptide chain elongation. In terms of biological role, mitochondrial GTPase that catalyzes the GTP-dependent ribosomal translocation step during translation elongation. During this step, the ribosome changes from the pre-translocational (PRE) to the post-translocational (POST) state as the newly formed A-site-bound peptidyl-tRNA and P-site-bound deacylated tRNA move to the P and E sites, respectively. Catalyzes the coordinated movement of the two tRNA molecules, the mRNA and conformational changes in the ribosome. The protein is Elongation factor G, mitochondrial of Debaryomyces hansenii (strain ATCC 36239 / CBS 767 / BCRC 21394 / JCM 1990 / NBRC 0083 / IGC 2968) (Yeast).